The primary structure comprises 281 residues: Probable endonuclease 4 (281 aa).

Residues His-78, His-118, Glu-149, Asp-181, His-184, His-216, Asp-229, His-231, and Glu-260 each contribute to the Zn(2+) site.

It belongs to the AP endonuclease 2 family. Zn(2+) is required as a cofactor.

It catalyses the reaction Endonucleolytic cleavage to 5'-phosphooligonucleotide end-products.. In terms of biological role, endonuclease IV plays a role in DNA repair. It cleaves phosphodiester bonds at apurinic or apyrimidinic (AP) sites, generating a 3'-hydroxyl group and a 5'-terminal sugar phosphate. In Thermoplasma acidophilum (strain ATCC 25905 / DSM 1728 / JCM 9062 / NBRC 15155 / AMRC-C165), this protein is Probable endonuclease 4.